The chain runs to 112 residues: ATP synthase epsilon chain (112 aa).

This sequence belongs to the ATPase epsilon chain family. As to quaternary structure, F-type ATPases have 2 components, CF(1) - the catalytic core - and CF(0) - the membrane proton channel. CF(1) has five subunits: alpha(3), beta(3), gamma(1), delta(1), epsilon(1). CF(0) has three main subunits: a, b and c.

It localises to the cell inner membrane. Its function is as follows. Produces ATP from ADP in the presence of a proton gradient across the membrane. This chain is ATP synthase epsilon chain, found in Rickettsia rickettsii (strain Sheila Smith).